Reading from the N-terminus, the 545-residue chain is Chaperonin GroEL 2 (545 aa).

ATP contacts are provided by residues 29–32 (TLGP), 86–90 (DGTTT), Gly413, 477–479 (DAA), and Asp493. The interval 526 to 545 (PEPAAAGHGHGHGHQHGPGF) is disordered. The span at 534-545 (GHGHGHQHGPGF) shows a compositional bias: basic residues.

The protein belongs to the chaperonin (HSP60) family. As to quaternary structure, forms a cylinder of 14 subunits composed of two heptameric rings stacked back-to-back. Interacts with the co-chaperonin GroES.

It is found in the cytoplasm. The enzyme catalyses ATP + H2O + a folded polypeptide = ADP + phosphate + an unfolded polypeptide.. Together with its co-chaperonin GroES, plays an essential role in assisting protein folding. The GroEL-GroES system forms a nano-cage that allows encapsulation of the non-native substrate proteins and provides a physical environment optimized to promote and accelerate protein folding. This chain is Chaperonin GroEL 2, found in Salinispora arenicola (strain CNS-205).